Here is a 367-residue protein sequence, read N- to C-terminus: Cytochrome b (367 aa).

The next 4 helical transmembrane spans lie at 25-45, 69-90, 105-125, and 170-190; these read FGSMLLTCLILQTSTGFFLAI, WIMQNTHAIGASMFFICIYIHI, WLSGTALLIILMATAFFGYVL, and FFALHFILPFLIISLSSIHII. Heme b contacts are provided by histidine 75 and histidine 89. Positions 174 and 188 each coordinate heme b. Histidine 193 contributes to the a ubiquinone binding site. 4 helical membrane passes run 218–238, 280–300, 312–332, and 339–358; these read YKDVLMVTIMITILFTIMSFT, LGGTLALLMSVIILTTAPFTH, LTQALFWTLIVTFITITWTAT, and FIFISQMASAIYFSFFIINP.

This sequence belongs to the cytochrome b family. In terms of assembly, the cytochrome bc1 complex contains 3 respiratory subunits (MT-CYB, CYC1 and UQCRFS1), 2 core proteins (UQCRC1 and UQCRC2) and probably 6 low-molecular weight proteins. Requires heme b as cofactor.

The protein localises to the mitochondrion inner membrane. In terms of biological role, component of the ubiquinol-cytochrome c reductase complex (complex III or cytochrome b-c1 complex) that is part of the mitochondrial respiratory chain. The b-c1 complex mediates electron transfer from ubiquinol to cytochrome c. Contributes to the generation of a proton gradient across the mitochondrial membrane that is then used for ATP synthesis. This is Cytochrome b (MT-CYB) from Austrelaps superbus (Lowland copperhead snake).